Here is a 49-residue protein sequence, read N- to C-terminus: Large ribosomal subunit protein bL33B (49 aa).

It belongs to the bacterial ribosomal protein bL33 family.

This chain is Large ribosomal subunit protein bL33B, found in Geobacillus thermodenitrificans (strain NG80-2).